We begin with the raw amino-acid sequence, 66 residues long: Large ribosomal subunit protein bL35 (66 aa).

This sequence belongs to the bacterial ribosomal protein bL35 family.

In Borreliella afzelii (strain PKo) (Borrelia afzelii), this protein is Large ribosomal subunit protein bL35.